Here is a 199-residue protein sequence, read N- to C-terminus: AICSLVLYLLTLMLMEKLSSNTVDAQEVELIWTILPAIVLILLALPSLQILYMMDEIDEPDLTLKAIGHQWYWTYEYTDFKDLSFDSYMVPTSELPSGHFRLLEVDHRVVVPMESPIRVIITAGDVLHSWAVPTLGVKTDAIPGRLNQTSFITTRPGIFYGQCSEICGANHSYMPIVVESTPLTHFENWSSLLSASSSL.

Residues 1-13 (AICSLVLYLLTLM) traverse the membrane as a helical segment. Residues 14–26 (LMEKLSSNTVDAQ) are Mitochondrial matrix-facing. The chain crosses the membrane as a helical span at residues 27 to 54 (EVELIWTILPAIVLILLALPSLQILYMM). The Mitochondrial intermembrane segment spans residues 55-199 (DEIDEPDLTL…SSLLSASSSL (145 aa)). Residues His128, Cys163, Glu165, Cys167, His171, and Met174 each coordinate Cu cation. Glu165 serves as a coordination point for Mg(2+).

Belongs to the cytochrome c oxidase subunit 2 family. As to quaternary structure, component of the cytochrome c oxidase (complex IV, CIV), a multisubunit enzyme composed of 14 subunits. The complex is composed of a catalytic core of 3 subunits MT-CO1, MT-CO2 and MT-CO3, encoded in the mitochondrial DNA, and 11 supernumerary subunits COX4I, COX5A, COX5B, COX6A, COX6B, COX6C, COX7A, COX7B, COX7C, COX8 and NDUFA4, which are encoded in the nuclear genome. The complex exists as a monomer or a dimer and forms supercomplexes (SCs) in the inner mitochondrial membrane with NADH-ubiquinone oxidoreductase (complex I, CI) and ubiquinol-cytochrome c oxidoreductase (cytochrome b-c1 complex, complex III, CIII), resulting in different assemblies (supercomplex SCI(1)III(2)IV(1) and megacomplex MCI(2)III(2)IV(2)). Found in a complex with TMEM177, COA6, COX18, COX20, SCO1 and SCO2. Interacts with TMEM177 in a COX20-dependent manner. Interacts with COX20. Interacts with COX16. Cu cation serves as cofactor.

The protein localises to the mitochondrion inner membrane. The catalysed reaction is 4 Fe(II)-[cytochrome c] + O2 + 8 H(+)(in) = 4 Fe(III)-[cytochrome c] + 2 H2O + 4 H(+)(out). In terms of biological role, component of the cytochrome c oxidase, the last enzyme in the mitochondrial electron transport chain which drives oxidative phosphorylation. The respiratory chain contains 3 multisubunit complexes succinate dehydrogenase (complex II, CII), ubiquinol-cytochrome c oxidoreductase (cytochrome b-c1 complex, complex III, CIII) and cytochrome c oxidase (complex IV, CIV), that cooperate to transfer electrons derived from NADH and succinate to molecular oxygen, creating an electrochemical gradient over the inner membrane that drives transmembrane transport and the ATP synthase. Cytochrome c oxidase is the component of the respiratory chain that catalyzes the reduction of oxygen to water. Electrons originating from reduced cytochrome c in the intermembrane space (IMS) are transferred via the dinuclear copper A center (CU(A)) of subunit 2 and heme A of subunit 1 to the active site in subunit 1, a binuclear center (BNC) formed by heme A3 and copper B (CU(B)). The BNC reduces molecular oxygen to 2 water molecules using 4 electrons from cytochrome c in the IMS and 4 protons from the mitochondrial matrix. The chain is Cytochrome c oxidase subunit 2 (MT-CO2) from Dromaius novaehollandiae (Emu).